The sequence spans 262 residues: Putative 1-acyl-sn-glycerol-3-phosphate acyltransferase acl-1 (262 aa).

Transmembrane regions (helical) follow at residues 3–23 (FLAILFVIAVLLLLAQLPVIG), 29–49 (VYFGMCLIIGGFLGGLASIPF), and 89–109 (IIIANHQSALDVLGMSFAWPV). Residues 94–99 (HQSALD) carry the HXXXXD motif motif.

This sequence belongs to the 1-acyl-sn-glycerol-3-phosphate acyltransferase family.

It localises to the membrane. The catalysed reaction is a 1-acyl-sn-glycero-3-phosphate + an acyl-CoA = a 1,2-diacyl-sn-glycero-3-phosphate + CoA. It participates in phospholipid metabolism; CDP-diacylglycerol biosynthesis; CDP-diacylglycerol from sn-glycerol 3-phosphate: step 2/3. Functionally, converts lysophosphatidic acid (LPA) into phosphatidic acid by incorporating an acyl moiety at the sn-2 position of the glycerol backbone. The chain is Putative 1-acyl-sn-glycerol-3-phosphate acyltransferase acl-1 (acl-1) from Caenorhabditis elegans.